The following is a 94-amino-acid chain: Progonadoliberin-3 (94 aa).

A signal peptide spans 1 to 23; the sequence is MEWKGRVLVQLLMLVCVLEVSLC. Gln24 bears the Pyrrolidone carboxylic acid mark. Residue Gly33 is modified to Glycine amide.

This sequence belongs to the GnRH family.

The protein resides in the secreted. Stimulates the secretion of gonadotropins. This is Progonadoliberin-3 (gnrh3) from Rutilus rutilus (Roach).